The following is a 209-amino-acid chain: Casparian strip membrane protein 1 (209 aa).

Topologically, residues Met-1–Gly-46 are cytoplasmic. The helical transmembrane segment at Ile-47–Val-67 threads the bilayer. Residues Ala-68–Thr-96 lie on the Extracellular side of the membrane. Residues Phe-97–Ile-117 traverse the membrane as a helical segment. The Cytoplasmic segment spans residues Val-118–Arg-129. Residues Leu-130–Ser-150 traverse the membrane as a helical segment. The Extracellular portion of the chain corresponds to Ala-151–Arg-179. The chain crosses the membrane as a helical span at residues Val-180–Leu-200. Residues Ser-201–His-209 are Cytoplasmic-facing.

The protein belongs to the Casparian strip membrane proteins (CASP) family. As to quaternary structure, homodimer and heterodimers.

The protein resides in the cell membrane. Functionally, regulates membrane-cell wall junctions and localized cell wall deposition. Required for establishment of the Casparian strip membrane domain (CSD) and the subsequent formation of Casparian strips, a cell wall modification of the root endodermis that determines an apoplastic barrier between the intraorganismal apoplasm and the extraorganismal apoplasm and prevents lateral diffusion. This chain is Casparian strip membrane protein 1, found in Nicotiana tabacum (Common tobacco).